The primary structure comprises 197 residues: Segregation and condensation protein B (197 aa).

It belongs to the ScpB family. Homodimer. Homodimerization may be required to stabilize the binding of ScpA to the Smc head domains. Component of a cohesin-like complex composed of ScpA, ScpB and the Smc homodimer, in which ScpA and ScpB bind to the head domain of Smc. The presence of the three proteins is required for the association of the complex with DNA.

The protein resides in the cytoplasm. In terms of biological role, participates in chromosomal partition during cell division. May act via the formation of a condensin-like complex containing Smc and ScpA that pull DNA away from mid-cell into both cell halves. The sequence is that of Segregation and condensation protein B from Halalkalibacterium halodurans (strain ATCC BAA-125 / DSM 18197 / FERM 7344 / JCM 9153 / C-125) (Bacillus halodurans).